A 396-amino-acid polypeptide reads, in one-letter code: Ornithine aminotransferase 2 (396 aa).

Lys255 is subject to N6-(pyridoxal phosphate)lysine.

The protein belongs to the class-III pyridoxal-phosphate-dependent aminotransferase family. OAT subfamily. Requires pyridoxal 5'-phosphate as cofactor.

Its subcellular location is the cytoplasm. The catalysed reaction is a 2-oxocarboxylate + L-ornithine = L-glutamate 5-semialdehyde + an L-alpha-amino acid. Its pathway is amino-acid biosynthesis; L-proline biosynthesis; L-glutamate 5-semialdehyde from L-ornithine: step 1/1. Functionally, catalyzes the interconversion of ornithine to glutamate semialdehyde. This is Ornithine aminotransferase 2 from Staphylococcus saprophyticus subsp. saprophyticus (strain ATCC 15305 / DSM 20229 / NCIMB 8711 / NCTC 7292 / S-41).